The sequence spans 216 residues: ATP phosphoribosyltransferase (216 aa).

Belongs to the ATP phosphoribosyltransferase family. Short subfamily. As to quaternary structure, heteromultimer composed of HisG and HisZ subunits.

It is found in the cytoplasm. It carries out the reaction 1-(5-phospho-beta-D-ribosyl)-ATP + diphosphate = 5-phospho-alpha-D-ribose 1-diphosphate + ATP. It participates in amino-acid biosynthesis; L-histidine biosynthesis; L-histidine from 5-phospho-alpha-D-ribose 1-diphosphate: step 1/9. Its function is as follows. Catalyzes the condensation of ATP and 5-phosphoribose 1-diphosphate to form N'-(5'-phosphoribosyl)-ATP (PR-ATP). Has a crucial role in the pathway because the rate of histidine biosynthesis seems to be controlled primarily by regulation of HisG enzymatic activity. The polypeptide is ATP phosphoribosyltransferase (Streptococcus thermophilus (strain ATCC BAA-491 / LMD-9)).